A 186-amino-acid polypeptide reads, in one-letter code: dITP/XTP pyrophosphatase (186 aa).

T7 to K12 lines the substrate pocket. Mg(2+)-binding residues include E36 and D65. The Proton acceptor role is filled by D65. Residues S66, F140 to D143, K163, and H168 to R169 each bind substrate.

Belongs to the HAM1 NTPase family. As to quaternary structure, homodimer. It depends on Mg(2+) as a cofactor. Mn(2+) is required as a cofactor.

It carries out the reaction XTP + H2O = XMP + diphosphate + H(+). It catalyses the reaction dITP + H2O = dIMP + diphosphate + H(+). The enzyme catalyses ITP + H2O = IMP + diphosphate + H(+). In terms of biological role, pyrophosphatase that catalyzes the hydrolysis of nucleoside triphosphates to their monophosphate derivatives, with a high preference for the non-canonical purine nucleotides XTP (xanthosine triphosphate), dITP (deoxyinosine triphosphate) and ITP. Seems to function as a house-cleaning enzyme that removes non-canonical purine nucleotides from the nucleotide pool, thus preventing their incorporation into DNA/RNA and avoiding chromosomal lesions. The polypeptide is dITP/XTP pyrophosphatase (Pyrococcus horikoshii (strain ATCC 700860 / DSM 12428 / JCM 9974 / NBRC 100139 / OT-3)).